We begin with the raw amino-acid sequence, 148 residues long: Hemoglobin subunit beta-2 (148 aa).

Residues 3–148 (EWTDAERTAI…VVSALCRQYH (146 aa)) form the Globin domain. Residues histidine 64 and histidine 93 each coordinate heme b.

As to quaternary structure, heterotetramer of two alpha chains and two beta chains. Red blood cells.

Functionally, involved in oxygen transport from gills to the various peripheral tissues. The polypeptide is Hemoglobin subunit beta-2 (ba2) (Danio rerio (Zebrafish)).